A 364-amino-acid polypeptide reads, in one-letter code: Trans-enoyl reductase traG (364 aa).

Position 51–54 (51–54 (VDAK)) interacts with NADP(+). 136 to 143 (LGLFTAGL) is a substrate binding site. NADP(+) is bound by residues 176-179 (STAT), 199-202 (SKAN), Tyr217, and 264-265 (LE). 286 to 290 (ALTVF) serves as a coordination point for substrate. An NADP(+)-binding site is contributed by 355 to 356 (MS).

Belongs to the zinc-containing alcohol dehydrogenase family. Monomer.

The protein operates within secondary metabolite biosynthesis. Functionally, trans-enoyl reductase; part of the tra gene cluster that produces terrestric acid. The clavatol biosynthesis cluster cla and the terrestric acid cluster tra are both involved in the production of peniphenones and penilactones. The non-reducing PKS claF is responsible for the formation of clavatol from successive condensations of 3 malonyl-CoA units, presumably with a simple acetyl-CoA starter unit, and 2 methylation steps. The esterase claE probably collaborates with claF by catalyzing the hydrolysis of ACP-bound acyl intermediates to free the ACP from stalled intermediates. The clavatol oxidase claD then converts clavatol to hydroxyclavatol. Spontaneous dehydration of hydroxyclavatol leads to the accumulation of the highly active ortho-quinone methide. On the other hand, the PKS-NRPS hybrid traA is involved in the formation of crustosic acid, with the help of traB and traD. The polyketide synthase module (PKS) of traA is responsible for the synthesis of the polyketide backbone via the condensation of an acetyl-CoA starter unit with 3 malonyl-CoA units. The downstream nonribosomal peptide synthetase (NRPS) module then amidates the carboxyl end of the polyketide with L-malic acid. Because traA lacks a designated enoylreductase (ER) domain, the required activity is provided the enoyl reductase traG. Crustosic acid undergoes decarboxylation and isomerization to the terrestric acid, catalyzed by the 2-oxoglutarate-dependent dioxygenase traH. Both acids are further converted to the 2 gamma-butyrolactones (R)-5-methyltetronic acid and (S)-5-carboxylmethyltetronic acid, with involvement of the cytochrome P450 monooxygenase claJ. Spontaneous addition of the methide to these gamma-butyrolactones leads to peniphenone D and penilactone D, which undergo again stereospecific attacking by methide to give penilactones A and B. In Penicillium crustosum (Blue mold fungus), this protein is Trans-enoyl reductase traG.